The following is a 344-amino-acid chain: N-acetyl-gamma-glutamyl-phosphate reductase (344 aa).

C150 is a catalytic residue.

Belongs to the NAGSA dehydrogenase family. Type 1 subfamily.

It localises to the cytoplasm. It carries out the reaction N-acetyl-L-glutamate 5-semialdehyde + phosphate + NADP(+) = N-acetyl-L-glutamyl 5-phosphate + NADPH + H(+). The protein operates within amino-acid biosynthesis; L-arginine biosynthesis; N(2)-acetyl-L-ornithine from L-glutamate: step 3/4. Functionally, catalyzes the NADPH-dependent reduction of N-acetyl-5-glutamyl phosphate to yield N-acetyl-L-glutamate 5-semialdehyde. This is N-acetyl-gamma-glutamyl-phosphate reductase from Pseudomonas aeruginosa (strain UCBPP-PA14).